Consider the following 531-residue polypeptide: Importin subunit alpha-3 (531 aa).

The 58-residue stretch at 1–58 (MSLRPSAKTEVRRNRYKVAVDAEEGRRRREDNLVEIRKNKREENLQKKRFTSSMAFGS) folds into the IBB domain. ARM repeat units lie at residues 111–153 (INEV…TSEN), 154–198 (TNVI…CRDL), 199–236 (VLSYGAMTPLLSQFNENTKLSMLRNATWTLSNFCRGKP), 237–281 (PPAF…DKIQ), 282–321 (AVIEAGVVPRLIQLLGHSSPSVLIPALRTIGNIVTGDDLQ), 322–364 (TQMV…NADQ), 365–405 (IQAV…GGTH), and 406–447 (DQIK…VVGE). The disordered stretch occupies residues 500 to 524 (DNEEEGNDENHAPQSGFQFGSTNVP). Residues 511 to 524 (APQSGFQFGSTNVP) show a composition bias toward polar residues.

It belongs to the importin alpha family. In terms of assembly, forms a complex with importin subunit beta-1. Interacts with PRL1. Interacts with A.tumefaciens VirD2 and VirE2.

Its subcellular location is the nucleus. Functionally, binds to conventional NLS motifs and mediates nuclear protein import across the nuclear envelope. Acts as a cellular receptor for the nuclear import of the virD2 protein of Agrobacterium, but is not essential for Agrobacterium-mediated root transformation. May be involved in the regulation of pathogen-induced salicylic acid accumulation. The protein is Importin subunit alpha-3 of Arabidopsis thaliana (Mouse-ear cress).